Reading from the N-terminus, the 179-residue chain is MNQEVIAKRYASALFQIALEQGQLDRIEEDVRAVRQALAENGEFLSLLSYPKLSLDQKKALIREAFAGVSTPVQNTLLLLLERHRFGLVPELAGTVSRPRSTTARGIAKAVAYSGAASTDEELRALSDVFAQKVGKQTLEIENIIDPELIGGVNVRIGNRIYDGSVSGQLERIRRQLIG.

Belongs to the ATPase delta chain family. F-type ATPases have 2 components, F(1) - the catalytic core - and F(0) - the membrane proton channel. F(1) has five subunits: alpha(3), beta(3), gamma(1), delta(1), epsilon(1). F(0) has three main subunits: a(1), b(2) and c(10-14). The alpha and beta chains form an alternating ring which encloses part of the gamma chain. F(1) is attached to F(0) by a central stalk formed by the gamma and epsilon chains, while a peripheral stalk is formed by the delta and b chains.

The protein localises to the cell membrane. Functionally, f(1)F(0) ATP synthase produces ATP from ADP in the presence of a proton or sodium gradient. F-type ATPases consist of two structural domains, F(1) containing the extramembraneous catalytic core and F(0) containing the membrane proton channel, linked together by a central stalk and a peripheral stalk. During catalysis, ATP synthesis in the catalytic domain of F(1) is coupled via a rotary mechanism of the central stalk subunits to proton translocation. Its function is as follows. This protein is part of the stalk that links CF(0) to CF(1). It either transmits conformational changes from CF(0) to CF(1) or is implicated in proton conduction. The protein is ATP synthase subunit delta of Bacillus sp. (strain PS3).